The following is a 129-amino-acid chain: uncharacterized protein (129 aa).

Basic residues predominate over residues 84 to 98 (QKTVSKKYKSRKGRR). Residues 84–129 (QKTVSKKYKSRKGRRYTRERNISSEKNKTDKSHKVRVGKIQNINND) are disordered. A compositionally biased stretch (basic and acidic residues) spans 99–115 (YTRERNISSEKNKTDKS).

This is an uncharacterized protein from Acanthamoeba polyphaga mimivirus (APMV).